A 327-amino-acid chain; its full sequence is Cyclic AMP-responsive element-binding protein 1 (327 aa).

Disordered regions lie at residues 1 to 29 and 94 to 113; these read MTMD…TVQA and SEDS…RREI. One can recognise a KID domain in the interval 8–146; it reads DNQQSGDAAV…IEEEKSEEET (139 aa). Residues 20–29 show a composition bias toward polar residues; it reads AESQQMTVQA. Residue serine 119 is modified to Phosphoserine; by CaMK1, CaMK2, CaMK4, PKB/AKT1 or PKB/AKT2, RPS6KA3, RPS6KA4, RPS6KA5 and SGK1. Lysine 122 participates in a covalent cross-link: Glycyl lysine isopeptide (Lys-Gly) (interchain with G-Cter in SUMO2). Residues 126 to 149 are disordered; sequence DLSSDAPGVPRIEEEKSEEETSAP. Serine 128 is modified (phosphoserine; by CaMK2). Serine 257 bears the Phosphoserine; by HIPK2 mark. The bZIP domain maps to 269–327; the sequence is ARKREVRLMKNREAARECRRKKKEYVKCLENRVAVLENQNKTLIEELKALKDLYCHKSD. The basic motif stretch occupies residues 270-295; the sequence is RKREVRLMKNREAARECRRKKKEYVK. Glycyl lysine isopeptide (Lys-Gly) (interchain with G-Cter in SUMO1) cross-links involve residues lysine 271 and lysine 290. Residues 297 to 318 form a leucine-zipper region; it reads LENRVAVLENQNKTLIEELKAL.

This sequence belongs to the bZIP family. Interacts with PPRC1. Binds DNA as a dimer. This dimer is stabilized by magnesium ions. Interacts, through the bZIP domain, with the coactivators CRTC1/TORC1, CRTC2/TORC2 and CRTC3/TORC3. When phosphorylated on Ser-119, binds CREBBP. Interacts with CREBL2; regulates CREB1 phosphorylation, stability and transcriptional activity. Interacts (phosphorylated form) with TOX3. Interacts with ARRB1. Binds to HIPK2. Interacts with SGK1. Interacts with TSSK4; this interaction facilitates phosphorylation on Ser-119. Forms a complex with KMT2A and CREBBP. Interacts with TOX4; CREB1 is required for full induction of TOX4-dependent activity and the interaction is increased by cAMP and inhibited by insulin. Post-translationally, phosphorylation of Ser-119 allows CREBBP binding. Stimulated by phosphorylation. Phosphorylation of both Ser-128 and Ser-119 in the SCN regulates the activity of CREB and participate in circadian rhythm generation. Phosphorylated upon calcium influx by CaMK4 and CaMK2 on Ser-119. CaMK4 is much more potent than CaMK2 in activating CREB. Phosphorylated by CaMK2 on Ser-128. Phosphorylation of Ser-128 blocks CREB-mediated transcription even when Ser-119 is phosphorylated. Phosphorylated by CaMK1. Phosphorylation of Ser-257 by HIPK2 in response to genotoxic stress promotes CREB1 activity, facilitating the recruitment of the coactivator CBP. Phosphorylated at Ser-119 by RPS6KA3, RPS6KA4 and RPS6KA5 in response to mitogenic or stress stimuli. CREBL2 positively regulates phosphorylation at Ser-119 thereby stimulating CREB1 transcriptional activity. In liver, phosphorylation is induced by fasting or glucagon in a circadian fashion. Phosphorylated by TSSK4 on Ser-119. Sumoylated with SUMO1. Sumoylation on Lys-290, but not on Lys-271, is required for nuclear localization of this protein. Sumoylation is enhanced under hypoxia, promoting nuclear localization and stabilization.

It is found in the nucleus. In terms of biological role, phosphorylation-dependent transcription factor that stimulates transcription upon binding to the DNA cAMP response element (CRE), a sequence present in many viral and cellular promoters. Transcription activation is enhanced by the TORC coactivators which act independently of Ser-119 phosphorylation. Involved in different cellular processes including the synchronization of circadian rhythmicity and the differentiation of adipose cells. Regulates the expression of apoptotic and inflammatory response factors in cardiomyocytes in response to ERFE-mediated activation of AKT signaling. This is Cyclic AMP-responsive element-binding protein 1 (Creb1) from Rattus norvegicus (Rat).